The following is a 266-amino-acid chain: Protein-ADP-ribose hydrolase (266 aa).

One can recognise a Macro domain in the interval 74-265; that stretch reads TDLKDLKPIK…LYKEAFNRDA (192 aa). The ADP-D-ribose site is built by D93, I94, and N107. Zn(2+)-binding residues include C113, H118, and C120. Residues C120, I121, D122, S212, T213, G214, and F216 each coordinate ADP-D-ribose.

This sequence belongs to the MacroD-type family. Zn-Macro subfamily. Zn(2+) is required as a cofactor.

The enzyme catalyses 4-O-(ADP-D-ribosyl)-L-aspartyl-[protein] + H2O = L-aspartyl-[protein] + ADP-D-ribose + H(+). Its function is as follows. ADP-ribosylhydrolase that specifically reverses the SirTM-mediated mono-ADP-ribosylation at an asparatate residue of GcvH-L, by releasing ADP-ribose from the target protein. May play a role in the regulation of the response to host-induced oxidative stress. The polypeptide is Protein-ADP-ribose hydrolase (Staphylococcus aureus (strain COL)).